The primary structure comprises 242 residues: Biosynthetic peptidoglycan transglycosylase (242 aa).

Residues 19–39 (LMVVLAVFWGGGIALFSVAPV) traverse the membrane as a helical segment.

The protein belongs to the glycosyltransferase 51 family.

It is found in the cell inner membrane. The enzyme catalyses [GlcNAc-(1-&gt;4)-Mur2Ac(oyl-L-Ala-gamma-D-Glu-L-Lys-D-Ala-D-Ala)](n)-di-trans,octa-cis-undecaprenyl diphosphate + beta-D-GlcNAc-(1-&gt;4)-Mur2Ac(oyl-L-Ala-gamma-D-Glu-L-Lys-D-Ala-D-Ala)-di-trans,octa-cis-undecaprenyl diphosphate = [GlcNAc-(1-&gt;4)-Mur2Ac(oyl-L-Ala-gamma-D-Glu-L-Lys-D-Ala-D-Ala)](n+1)-di-trans,octa-cis-undecaprenyl diphosphate + di-trans,octa-cis-undecaprenyl diphosphate + H(+). It participates in cell wall biogenesis; peptidoglycan biosynthesis. Its function is as follows. Peptidoglycan polymerase that catalyzes glycan chain elongation from lipid-linked precursors. The polypeptide is Biosynthetic peptidoglycan transglycosylase (Escherichia coli O157:H7).